The chain runs to 48 residues: Large ribosomal subunit protein bL32 (48 aa).

A disordered region spans residues 1–20 (MAVPDRRVSKTRAAKRRTHY). The segment covering 9-20 (SKTRAAKRRTHY) has biased composition (basic residues).

The protein belongs to the bacterial ribosomal protein bL32 family.

This Helicobacter acinonychis (strain Sheeba) protein is Large ribosomal subunit protein bL32.